Consider the following 155-residue polypeptide: 6,7-dimethyl-8-ribityllumazine synthase (155 aa).

5-amino-6-(D-ribitylamino)uracil-binding positions include phenylalanine 23, 57-59, and 81-83; these read AYE and AVI. Residue 86–87 coordinates (2S)-2-hydroxy-3-oxobutyl phosphate; it reads AT. Histidine 89 (proton donor) is an active-site residue. 5-amino-6-(D-ribitylamino)uracil is bound at residue phenylalanine 114. Residue arginine 128 participates in (2S)-2-hydroxy-3-oxobutyl phosphate binding.

The protein belongs to the DMRL synthase family.

It carries out the reaction (2S)-2-hydroxy-3-oxobutyl phosphate + 5-amino-6-(D-ribitylamino)uracil = 6,7-dimethyl-8-(1-D-ribityl)lumazine + phosphate + 2 H2O + H(+). Its pathway is cofactor biosynthesis; riboflavin biosynthesis; riboflavin from 2-hydroxy-3-oxobutyl phosphate and 5-amino-6-(D-ribitylamino)uracil: step 1/2. Catalyzes the formation of 6,7-dimethyl-8-ribityllumazine by condensation of 5-amino-6-(D-ribitylamino)uracil with 3,4-dihydroxy-2-butanone 4-phosphate. This is the penultimate step in the biosynthesis of riboflavin. The polypeptide is 6,7-dimethyl-8-ribityllumazine synthase (Desulfotalea psychrophila (strain LSv54 / DSM 12343)).